Here is a 457-residue protein sequence, read N- to C-terminus: Multidrug resistance protein MdtK (457 aa).

The next 12 helical transmembrane spans lie at 11–31 (LLAL…MGFV), 53–73 (IWLP…PVIA), 93–113 (WLAG…GYII), 127–147 (AVGY…FQVA), 160–180 (GMVM…IFIY), 188–208 (LGGI…FIAM), 243–263 (LPIA…ALLV), 276–296 (IALN…AAVT), 314–334 (AART…IFTV), 350–370 (VVAL…SDSI), 387–407 (IFFI…YILA), and 418–438 (PAGF…LMML).

It belongs to the multi antimicrobial extrusion (MATE) (TC 2.A.66.1) family. MdtK subfamily.

The protein localises to the cell inner membrane. Multidrug efflux pump that functions probably as a Na(+)/drug antiporter. The polypeptide is Multidrug resistance protein MdtK (Salmonella newport (strain SL254)).